Consider the following 430-residue polypeptide: Histidine--tRNA ligase (430 aa).

This sequence belongs to the class-II aminoacyl-tRNA synthetase family. In terms of assembly, homodimer.

The protein resides in the cytoplasm. The catalysed reaction is tRNA(His) + L-histidine + ATP = L-histidyl-tRNA(His) + AMP + diphosphate + H(+). This Acinetobacter baumannii (strain ACICU) protein is Histidine--tRNA ligase.